Reading from the N-terminus, the 375-residue chain is MDSPSSVSSYSSSSLSPSFSTSSVNSDFSFPSDNEREGKGTHELRPDTVGQRGGSRPSPGPIRCRHRPRVSSNQHTAPHLEQQGSEVKRSRDGEQETSLNTQGCTTEGDLLFAQKCKELQGFIRPLTDLLNGLKMGRFDRGLSSFQQSVAMDRIQRIVGVLQKPQMGERYLGTLLQVEGMLKTWFPHIAAQKSSSGGSRHQISKHFPSHHGDPGAASPAPLLEKMGQTQLGHLVLKPKQPWHLTGWPAMNLTWIHSTPICNPPLSSQGSASGHSPIGTGASIGVILVLQKGGQPFTHSAPGTPVPPTPLSPVVPGDLKKLPGEEPRCHSLPVTLPSDWSCILCPPVLPTTDREMTKGHPEPQMTSHPPVAPDPQP.

The segment covering 1–32 has biased composition (low complexity); it reads MDSPSSVSSYSSSSLSPSFSTSSVNSDFSFPS. Disordered regions lie at residues 1–102, 192–218, and 351–375; these read MDSP…LNTQ, KSSS…AASP, and DREM…DPQP. Residues 33 to 46 are compositionally biased toward basic and acidic residues; the sequence is DNEREGKGTHELRP.

As to quaternary structure, interacts with BMAL1, PER2, CRY2, BHLHE41, HDAC1 NR3C1.

It localises to the nucleus. It is found in the PML body. Its function is as follows. Transcriptional repressor which forms a negative regulatory component of the circadian clock and acts independently of the circadian transcriptional repressors: CRY1, CRY2 and BHLHE41. In a histone deacetylase-dependent manner represses the transcriptional activator activity of the CLOCK-BMAL1 heterodimer. Abrogates the interaction of BMAL1 with the transcriptional coactivator CREBBP and can repress the histone acetyl-transferase activity of the CLOCK-BMAL1 heterodimer, reducing histone acetylation of its target genes. Rhythmically binds the E-box elements (5'-CACGTG-3') on circadian gene promoters and its occupancy shows circadian oscillation antiphasic to BMAL1. Interacts with the glucocorticoid receptor (NR3C1) and contributes to the repressive function in the glucocorticoid response. In Mus musculus (Mouse), this protein is Circadian-associated transcriptional repressor (Ciart).